The sequence spans 396 residues: MAKAKFERTKPHVNIGTIGHVDHGKTTLTAAISKVLYDKYPTLNEQRDFASIDSAPEEKQRGITINISHVEYQTEKRHYAHVDAPGHADYIKNMITGAAQMDGAILVVAATDGPMAQTREHVLLARQVGVPYLLVALNKSDMVEDEELLDLVEMEVRELLSSQEFDGDNAPVVRVSGLKALEGDPQWVKSVEDLMEAVDESVPDPIRDKDKPFLMPIEDVFTITGRGTVVTGRAERGTLAINSEVEIVGIRPIQKTTVTGIEMFHKQLDEAWAGENCGLLLRGIKREDVERGQVVVKPGSITPHTDFEANVYILSKDEGGRHNPFYSNYRPQFYFRTTDVTGVITLPEGTEMVMPGDNTEMTVALIQPIAMEDGLGFAIREGGRTVGSGRVTKIIK.

The tr-type G domain maps to Lys10–Ile206. The interval Gly19–Thr26 is G1. Gly19 to Thr26 serves as a coordination point for GTP. Thr26 contributes to the Mg(2+) binding site. Residues Gly62–Asn66 are G2. The segment at Asp83–Gly86 is G3. GTP contacts are provided by residues Asp83–His87 and Asn138–Asp141. Residues Asn138–Asp141 form a G4 region. The segment at Ser176 to Leu178 is G5.

This sequence belongs to the TRAFAC class translation factor GTPase superfamily. Classic translation factor GTPase family. EF-Tu/EF-1A subfamily. As to quaternary structure, monomer.

It is found in the cytoplasm. The enzyme catalyses GTP + H2O = GDP + phosphate + H(+). In terms of biological role, GTP hydrolase that promotes the GTP-dependent binding of aminoacyl-tRNA to the A-site of ribosomes during protein biosynthesis. This Renibacterium salmoninarum (strain ATCC 33209 / DSM 20767 / JCM 11484 / NBRC 15589 / NCIMB 2235) protein is Elongation factor Tu.